The chain runs to 568 residues: Urease subunit alpha (568 aa).

In terms of domain architecture, Urease spans 130–568 (GGIDTHIHFI…LPMAQRYFLF (439 aa)). 3 residues coordinate Ni(2+): His-135, His-137, and Lys-218. An N6-carboxylysine modification is found at Lys-218. A substrate-binding site is contributed by His-220. Residues His-247 and His-273 each coordinate Ni(2+). Catalysis depends on His-321, which acts as the Proton donor. Asp-361 contributes to the Ni(2+) binding site.

Belongs to the metallo-dependent hydrolases superfamily. Urease alpha subunit family. Heterotrimer of UreA (gamma), UreB (beta) and UreC (alpha) subunits. Three heterotrimers associate to form the active enzyme. Ni cation is required as a cofactor. In terms of processing, carboxylation allows a single lysine to coordinate two nickel ions.

The protein resides in the cytoplasm. It carries out the reaction urea + 2 H2O + H(+) = hydrogencarbonate + 2 NH4(+). It participates in nitrogen metabolism; urea degradation; CO(2) and NH(3) from urea (urease route): step 1/1. This chain is Urease subunit alpha, found in Burkholderia mallei (strain NCTC 10247).